A 142-amino-acid polypeptide reads, in one-letter code: Putative transcriptional regulatory protein PF0535 (142 aa).

It belongs to the Tfx family.

In terms of biological role, putative transcriptional regulator. The protein is Putative transcriptional regulatory protein PF0535 of Pyrococcus furiosus (strain ATCC 43587 / DSM 3638 / JCM 8422 / Vc1).